A 919-amino-acid polypeptide reads, in one-letter code: Calcium-transporting ATPase type 2C member 1 (919 aa).

Residues 1–70 are Cytoplasmic-facing; the sequence is MKVARFQKIP…NEFDISEDEP (70 aa). The chain crosses the membrane as a helical span at residues 71 to 91; it reads LWKKYISQFKNPLIMLLLASA. At 92-104 the chain is on the lumenal side; it reads VISVLMHQFDDAV. The helical transmembrane segment at 105 to 123 threads the bilayer; it reads SITVAILIVVTVAFVQEYR. The Cytoplasmic portion of the chain corresponds to 124-262; the sequence is SEKSLEELSK…APKTPLQKSM (139 aa). The chain crosses the membrane as a helical span at residues 263–282; the sequence is DLLGKQLSFYSFGIIGIIML. The Lumenal segment spans residues 283–294; the sequence is VGWLLGKDILEM. The helical transmembrane segment at 295–312 threads the bilayer; sequence FTISVSLAVAAIPEGLPI. Ca(2+)-binding residues include valine 303, alanine 304, isoleucine 306, and glutamate 308. Residues 313–699 lie on the Cytoplasmic side of the membrane; the sequence is VVTVTLALGV…EEGKGIYNNI (387 aa). Aspartate 350 acts as the 4-aspartylphosphate intermediate in catalysis. Mg(2+) is bound by residues aspartate 644 and aspartate 648. Residues 700–719 traverse the membrane as a helical segment; it reads KNFVRFQLSTSIAALTLISL. The Lumenal portion of the chain corresponds to 720 to 729; that stretch reads ATLMNFPNPL. A helical membrane pass occupies residues 730-750; it reads NAMQILWINIIMDGPPAQSLG. Ca(2+) contacts are provided by asparagine 738 and aspartate 742. The Cytoplasmic portion of the chain corresponds to 751 to 770; it reads VEPVDKDVIRKPPRNWKDSI. Residues 771–793 form a helical membrane-spanning segment; the sequence is LTKNLILKILVSSIIIVCGTLFV. Residues 794-808 lie on the Lumenal side of the membrane; sequence FWRELRDNVITPRDT. The helical transmembrane segment at 809–828 threads the bilayer; that stretch reads TMTFTCFVFFDMFNALSSRS. The Cytoplasmic portion of the chain corresponds to 829–841; it reads QTKSVFEIGLCSN. Residues 842–860 form a helical membrane-spanning segment; sequence RMFCYAVLGSIMGQLLVIY. At 861–875 the chain is on the lumenal side; that stretch reads FPPLQKVFQTESLSI. Residues 876–896 traverse the membrane as a helical segment; sequence LDLLFLLGLTSSVCIVAEIIK. At 897–919 the chain is on the cytoplasmic side; it reads KVERSREKIQKHVSSTSSSFLEV.

The protein belongs to the cation transport ATPase (P-type) (TC 3.A.3) family. Type IIA subfamily. Monomer. Homodimer. As to expression, found in most tissues except colon, thymus, spleen and leukocytes. Expressed in keratinocytes (at protein level).

It is found in the golgi apparatus. The protein localises to the trans-Golgi network membrane. It localises to the golgi stack membrane. The enzyme catalyses Ca(2+)(in) + ATP + H2O = Ca(2+)(out) + ADP + phosphate + H(+). It catalyses the reaction Mn(2+)(in) + ATP + H2O = Mn(2+)(out) + ADP + phosphate + H(+). In terms of biological role, ATP-driven pump that supplies the Golgi apparatus with Ca(2+) and Mn(2+) ions, both essential cofactors for processing and trafficking of newly synthesized proteins in the secretory pathway. Within a catalytic cycle, acquires Ca(2+) or Mn(2+) ions on the cytoplasmic side of the membrane and delivers them to the lumenal side. The transfer of ions across the membrane is coupled to ATP hydrolysis and is associated with a transient phosphorylation that shifts the pump conformation from inward-facing to outward-facing state. Plays a primary role in the maintenance of Ca(2+) homeostasis in the trans-Golgi compartment with a functional impact on Golgi and post-Golgi protein sorting as well as a structural impact on cisternae morphology. Responsible for loading the Golgi stores with Ca(2+) ions in keratinocytes, contributing to keratinocyte differentiation and epidermis integrity. Participates in Ca(2+) and Mn(2+) ions uptake into the Golgi store of hippocampal neurons and regulates protein trafficking required for neural polarity. May also play a role in the maintenance of Ca(2+) and Mn(2+) homeostasis and signaling in the cytosol while preventing cytotoxicity. The protein is Calcium-transporting ATPase type 2C member 1 of Homo sapiens (Human).